The primary structure comprises 307 residues: Acetaldehyde dehydrogenase 2 (307 aa).

Residue Cys-131 is the Acyl-thioester intermediate of the active site. Residues 162 to 170 (SVGPGTRKN) and Asn-273 each bind NAD(+).

Belongs to the acetaldehyde dehydrogenase family.

It catalyses the reaction acetaldehyde + NAD(+) + CoA = acetyl-CoA + NADH + H(+). This is Acetaldehyde dehydrogenase 2 (aphF) from Comamonas testosteroni (Pseudomonas testosteroni).